We begin with the raw amino-acid sequence, 550 residues long: Hydroxylamine reductase (550 aa).

The [2Fe-2S] cluster site is built by C3, C6, C18, and C25. Residues H249, E273, C317, C405, C433, C458, E492, and K494 each contribute to the hybrid [4Fe-2O-2S] cluster site. Cysteine persulfide is present on C405.

It belongs to the HCP family. [2Fe-2S] cluster is required as a cofactor. Hybrid [4Fe-2O-2S] cluster serves as cofactor.

The protein resides in the cytoplasm. It catalyses the reaction A + NH4(+) + H2O = hydroxylamine + AH2 + H(+). Its function is as follows. Catalyzes the reduction of hydroxylamine to form NH(3) and H(2)O. In Salmonella schwarzengrund (strain CVM19633), this protein is Hydroxylamine reductase.